A 95-amino-acid polypeptide reads, in one-letter code: Small ribosomal subunit protein bS6 (95 aa).

It belongs to the bacterial ribosomal protein bS6 family.

Binds together with bS18 to 16S ribosomal RNA. This is Small ribosomal subunit protein bS6 (rpsF) from Halalkalibacterium halodurans (strain ATCC BAA-125 / DSM 18197 / FERM 7344 / JCM 9153 / C-125) (Bacillus halodurans).